A 131-amino-acid chain; its full sequence is D-ribose pyranase (131 aa).

Catalysis depends on H20, which acts as the Proton donor. Substrate is bound by residues D28, H98, and F120 to N122.

The protein belongs to the RbsD / FucU family. RbsD subfamily. In terms of assembly, homodecamer.

It is found in the cytoplasm. The enzyme catalyses beta-D-ribopyranose = beta-D-ribofuranose. Its pathway is carbohydrate metabolism; D-ribose degradation; D-ribose 5-phosphate from beta-D-ribopyranose: step 1/2. Catalyzes the interconversion of beta-pyran and beta-furan forms of D-ribose. This chain is D-ribose pyranase, found in Petrotoga mobilis (strain DSM 10674 / SJ95).